Reading from the N-terminus, the 117-residue chain is Basic phospholipase A2 pseudexin A chain (117 aa).

7 disulfides stabilise this stretch: Cys11–Cys71, Cys27–Cys117, Cys29–Cys45, Cys44–Cys98, Cys51–Cys91, Cys60–Cys84, and Cys78–Cys89. Tyr28, Gly30, and Gly32 together coordinate Ca(2+). Residue His48 is part of the active site. Residue Asp49 coordinates Ca(2+). Residue Asp92 is part of the active site.

This sequence belongs to the phospholipase A2 family. Group I subfamily. D49 sub-subfamily. It depends on Ca(2+) as a cofactor. In terms of tissue distribution, expressed by the venom gland.

It is found in the secreted. It carries out the reaction a 1,2-diacyl-sn-glycero-3-phosphocholine + H2O = a 1-acyl-sn-glycero-3-phosphocholine + a fatty acid + H(+). In terms of biological role, PLA2 catalyzes the calcium-dependent hydrolysis of the 2-acyl groups in 3-sn-phosphoglycerides. This Pseudechis porphyriacus (Red-bellied black snake) protein is Basic phospholipase A2 pseudexin A chain.